The chain runs to 1597 residues: Mitogen-activated protein kinase kinase kinase 4 (1597 aa).

Disordered regions lie at residues 1–128 and 424–465; these read MRDA…VETV and SPRP…PRVP. Residues 59 to 69 show a composition bias toward acidic residues; it reads SDPEDFSDETN. S77 carries the post-translational modification Phosphoserine. Residues 84–94 show a composition bias toward basic residues; the sequence is QMKRLSAKHQR. Phosphoserine is present on S424. Position 440 is a phosphothreonine (T440). Residue S449 is modified to Phosphoserine. Acidic residues predominate over residues 449–458; that stretch reads SGTEESDEEP. Position 451 is a phosphothreonine (T451). 2 positions are modified to phosphoserine: S454 and S492. 3 disordered regions span residues 1137-1157, 1190-1220, and 1233-1263; these read RPVK…IIPT, AAGR…SVPE, and FRSL…TRRS. Residues 1210–1219 are compositionally biased toward polar residues; that stretch reads APDTRGSSVP. Residues S1241 and S1263 each carry the phosphoserine modification. A compositionally biased stretch (basic and acidic residues) spans 1241-1250; it reads SPTEERDEPA. The Protein kinase domain maps to 1332-1590; the sequence is WQRGNKIGEG…ASQLLDHAFV (259 aa). ATP contacts are provided by residues 1338–1346 and K1361; that span reads IGEGQYGKV. D1452 acts as the Proton acceptor in catalysis.

This sequence belongs to the protein kinase superfamily. STE Ser/Thr protein kinase family. MAP kinase kinase kinase subfamily. In terms of assembly, monomer and homodimer. Homodimerization enhances kinase activity. Interacts with CDC42. Interacts with TRAF4; this promotes homodimerization. Binds both upstream activators and downstream substrates in multimolecular complexes. Interacts with AXIN1 and DIXDC1; interaction with DIXDC1 prevents interaction with AXIN1. Interacts with GADD45 and MAP2K6. Interacts with ZFP36; this interaction enhances the association with SH3KBP1/CIN85. Interacts with SH3KBP1; this interaction enhances the association with ZFP36. Mg(2+) serves as cofactor. In terms of tissue distribution, widely expressed. High expression was found in skeletal muscle, kidney, testis followed by heart brain and lung. Low expression was found in spleen.

Its subcellular location is the cytoplasm. It is found in the perinuclear region. The enzyme catalyses L-seryl-[protein] + ATP = O-phospho-L-seryl-[protein] + ADP + H(+). The catalysed reaction is L-threonyl-[protein] + ATP = O-phospho-L-threonyl-[protein] + ADP + H(+). N-terminal autoinhibitory domain interacts with the C-terminal kinase domain, inhibiting kinase activity, and preventing interaction with its substrate, MAP2K6. The GADD45 proteins activate the kinase by binding to the N-terminal domain. Activated by phosphorylation on Thr-1494. In terms of biological role, component of a protein kinase signal transduction cascade. Activates the CSBP2, P38 and JNK MAPK pathways, but not the ERK pathway. Specifically phosphorylates and activates MAP2K4 and MAP2K6. This chain is Mitogen-activated protein kinase kinase kinase 4 (Map3k4), found in Mus musculus (Mouse).